Reading from the N-terminus, the 207-residue chain is Large ribosomal subunit protein uL4 (207 aa).

Residues 44-78 form a disordered region; it reads LRQGTHKTKTRSEVRGGGRKPWRQKGTGRARQGSI. Over residues 60 to 71 the composition is skewed to basic residues; that stretch reads GGRKPWRQKGTG.

It belongs to the universal ribosomal protein uL4 family. As to quaternary structure, part of the 50S ribosomal subunit.

Functionally, one of the primary rRNA binding proteins, this protein initially binds near the 5'-end of the 23S rRNA. It is important during the early stages of 50S assembly. It makes multiple contacts with different domains of the 23S rRNA in the assembled 50S subunit and ribosome. Its function is as follows. Forms part of the polypeptide exit tunnel. In Halalkalibacterium halodurans (strain ATCC BAA-125 / DSM 18197 / FERM 7344 / JCM 9153 / C-125) (Bacillus halodurans), this protein is Large ribosomal subunit protein uL4.